A 288-amino-acid chain; its full sequence is S-methyl-5'-thioadenosine phosphorylase (288 aa).

Residues serine 10, 52–53 (RH), and 85–86 (TA) contribute to the phosphate site. Methionine 188 provides a ligand contact to substrate. Threonine 189 lines the phosphate pocket. A substrate-binding site is contributed by 212–214 (DYD).

This sequence belongs to the PNP/MTAP phosphorylase family. MTAP subfamily. In terms of assembly, homotrimer.

It localises to the cytoplasm. Its subcellular location is the nucleus. The enzyme catalyses S-methyl-5'-thioadenosine + phosphate = 5-(methylsulfanyl)-alpha-D-ribose 1-phosphate + adenine. It functions in the pathway amino-acid biosynthesis; L-methionine biosynthesis via salvage pathway; S-methyl-5-thio-alpha-D-ribose 1-phosphate from S-methyl-5'-thioadenosine (phosphorylase route): step 1/1. Catalyzes the reversible phosphorylation of S-methyl-5'-thioadenosine (MTA) to adenine and 5-methylthioribose-1-phosphate. Involved in the breakdown of MTA, a major by-product of polyamine biosynthesis. Responsible for the first step in the methionine salvage pathway after MTA has been generated from S-adenosylmethionine. Has broad substrate specificity with 6-aminopurine nucleosides as preferred substrates. The polypeptide is S-methyl-5'-thioadenosine phosphorylase (Caenorhabditis elegans).